We begin with the raw amino-acid sequence, 227 residues long: Cytochrome c oxidase subunit 2 (227 aa).

Residues 1 to 14 (MAYPVQLGFQDAAS) lie on the Mitochondrial intermembrane side of the membrane. A helical transmembrane segment spans residues 15–45 (PIMEELLYFHDHTLMIMFLISSLVLYIISLM). At 46 to 59 (LTTELIHTSTMDAQ) the chain is on the mitochondrial matrix side. Residues 60–87 (EVETVWTILPAVILILIALPSLRILYMM) form a helical membrane-spanning segment. Over 88 to 227 (DEISTPSLTL…HFEEWLLSML (140 aa)) the chain is Mitochondrial intermembrane. Positions 161, 196, 198, 200, 204, and 207 each coordinate Cu cation. A Mg(2+)-binding site is contributed by glutamate 198.

It belongs to the cytochrome c oxidase subunit 2 family. Component of the cytochrome c oxidase (complex IV, CIV), a multisubunit enzyme composed of 14 subunits. The complex is composed of a catalytic core of 3 subunits MT-CO1, MT-CO2 and MT-CO3, encoded in the mitochondrial DNA, and 11 supernumerary subunits COX4I, COX5A, COX5B, COX6A, COX6B, COX6C, COX7A, COX7B, COX7C, COX8 and NDUFA4, which are encoded in the nuclear genome. The complex exists as a monomer or a dimer and forms supercomplexes (SCs) in the inner mitochondrial membrane with NADH-ubiquinone oxidoreductase (complex I, CI) and ubiquinol-cytochrome c oxidoreductase (cytochrome b-c1 complex, complex III, CIII), resulting in different assemblies (supercomplex SCI(1)III(2)IV(1) and megacomplex MCI(2)III(2)IV(2)). Found in a complex with TMEM177, COA6, COX18, COX20, SCO1 and SCO2. Interacts with TMEM177 in a COX20-dependent manner. Interacts with COX20. Interacts with COX16. Requires Cu cation as cofactor.

The protein localises to the mitochondrion inner membrane. It catalyses the reaction 4 Fe(II)-[cytochrome c] + O2 + 8 H(+)(in) = 4 Fe(III)-[cytochrome c] + 2 H2O + 4 H(+)(out). In terms of biological role, component of the cytochrome c oxidase, the last enzyme in the mitochondrial electron transport chain which drives oxidative phosphorylation. The respiratory chain contains 3 multisubunit complexes succinate dehydrogenase (complex II, CII), ubiquinol-cytochrome c oxidoreductase (cytochrome b-c1 complex, complex III, CIII) and cytochrome c oxidase (complex IV, CIV), that cooperate to transfer electrons derived from NADH and succinate to molecular oxygen, creating an electrochemical gradient over the inner membrane that drives transmembrane transport and the ATP synthase. Cytochrome c oxidase is the component of the respiratory chain that catalyzes the reduction of oxygen to water. Electrons originating from reduced cytochrome c in the intermembrane space (IMS) are transferred via the dinuclear copper A center (CU(A)) of subunit 2 and heme A of subunit 1 to the active site in subunit 1, a binuclear center (BNC) formed by heme A3 and copper B (CU(B)). The BNC reduces molecular oxygen to 2 water molecules using 4 electrons from cytochrome c in the IMS and 4 protons from the mitochondrial matrix. This chain is Cytochrome c oxidase subunit 2 (MT-CO2), found in Eulemur macaco (Black lemur).